The chain runs to 277 residues: Phosphoenolpyruvate synthase regulatory protein (277 aa).

Residue 157-164 (GVSRCGKT) participates in ADP binding.

This sequence belongs to the pyruvate, phosphate/water dikinase regulatory protein family. PSRP subfamily.

It catalyses the reaction [pyruvate, water dikinase] + ADP = [pyruvate, water dikinase]-phosphate + AMP + H(+). The catalysed reaction is [pyruvate, water dikinase]-phosphate + phosphate + H(+) = [pyruvate, water dikinase] + diphosphate. Functionally, bifunctional serine/threonine kinase and phosphorylase involved in the regulation of the phosphoenolpyruvate synthase (PEPS) by catalyzing its phosphorylation/dephosphorylation. The sequence is that of Phosphoenolpyruvate synthase regulatory protein from Escherichia coli O7:K1 (strain IAI39 / ExPEC).